A 445-amino-acid polypeptide reads, in one-letter code: Exodeoxyribonuclease 7 large subunit (445 aa).

The protein belongs to the XseA family. As to quaternary structure, heterooligomer composed of large and small subunits.

It is found in the cytoplasm. It carries out the reaction Exonucleolytic cleavage in either 5'- to 3'- or 3'- to 5'-direction to yield nucleoside 5'-phosphates.. Functionally, bidirectionally degrades single-stranded DNA into large acid-insoluble oligonucleotides, which are then degraded further into small acid-soluble oligonucleotides. This is Exodeoxyribonuclease 7 large subunit from Xanthomonas euvesicatoria pv. vesicatoria (strain 85-10) (Xanthomonas campestris pv. vesicatoria).